Consider the following 262-residue polypeptide: Hemin import ATP-binding protein HmuV (262 aa).

In terms of domain architecture, ABC transporter spans 1-247 (MRNLTLQRGR…ERIKQIFAFD (247 aa)). 31-38 (GPNGTGKS) serves as a coordination point for ATP.

The protein belongs to the ABC transporter superfamily. Heme (hemin) importer (TC 3.A.1.14.5) family. In terms of assembly, the complex is composed of two ATP-binding proteins (HmuV), two transmembrane proteins (HmuU) and a solute-binding protein (HmuT).

It localises to the cell inner membrane. In terms of biological role, part of the ABC transporter complex HmuTUV involved in hemin import. Responsible for energy coupling to the transport system. This chain is Hemin import ATP-binding protein HmuV, found in Plesiomonas shigelloides (Aeromonas shigelloides).